A 193-amino-acid polypeptide reads, in one-letter code: MIKNSYINEKLNFYQKSFLTCMLLIVIVIVYFFSKNYLDKPKNSYVHTKMMTFLTNSNELNISKNLIWTKKTISGNLMSLKLAKVYVINNQLEKALKILEKSKNNSVDLNFFNLISFKIAQIYFQKNNIKKAITTIKDILGDSWDSIRNNFIGDVYFKLDNQKRAVTLWKRSIIQNKKIEFEKIIQMKINNYN.

Residues 1–11 (MIKNSYINEKL) lie on the Cytoplasmic side of the membrane. The chain crosses the membrane as a helical span at residues 12–34 (NFYQKSFLTCMLLIVIVIVYFFS). Topologically, residues 35 to 193 (KNYLDKPKNS…IIQMKINNYN (159 aa)) are extracellular.

This sequence belongs to the YfgM family. As to quaternary structure, interacts with the Sec translocon. Forms a complex with PpiD.

It is found in the cell membrane. In terms of biological role, may mediate protein transfer from the Sec translocon to the chaperone network via its extracellular C-terminal region. In Buchnera aphidicola subsp. Baizongia pistaciae (strain Bp), this protein is Ancillary SecYEG translocon subunit.